Consider the following 141-residue polypeptide: Nucleoside diphosphate kinase (141 aa).

ATP contacts are provided by Lys-11, Phe-59, Arg-87, Thr-93, Arg-104, and Asn-114. The Pros-phosphohistidine intermediate role is filled by His-117.

This sequence belongs to the NDK family. As to quaternary structure, homotetramer. The cofactor is Mg(2+).

Its subcellular location is the cytoplasm. It carries out the reaction a 2'-deoxyribonucleoside 5'-diphosphate + ATP = a 2'-deoxyribonucleoside 5'-triphosphate + ADP. The catalysed reaction is a ribonucleoside 5'-diphosphate + ATP = a ribonucleoside 5'-triphosphate + ADP. In terms of biological role, major role in the synthesis of nucleoside triphosphates other than ATP. The ATP gamma phosphate is transferred to the NDP beta phosphate via a ping-pong mechanism, using a phosphorylated active-site intermediate. The sequence is that of Nucleoside diphosphate kinase from Photorhabdus laumondii subsp. laumondii (strain DSM 15139 / CIP 105565 / TT01) (Photorhabdus luminescens subsp. laumondii).